A 141-amino-acid polypeptide reads, in one-letter code: Large ribosomal subunit protein uL11 (141 aa).

Belongs to the universal ribosomal protein uL11 family. In terms of assembly, part of the ribosomal stalk of the 50S ribosomal subunit. Interacts with L10 and the large rRNA to form the base of the stalk. L10 forms an elongated spine to which L12 dimers bind in a sequential fashion forming a multimeric L10(L12)X complex. Post-translationally, one or more lysine residues are methylated.

In terms of biological role, forms part of the ribosomal stalk which helps the ribosome interact with GTP-bound translation factors. This Streptococcus uberis (strain ATCC BAA-854 / 0140J) protein is Large ribosomal subunit protein uL11.